Consider the following 241-residue polypeptide: GDSL esterase/lipase At5g45920 (241 aa).

Ser-12 serves as the catalytic Nucleophile. Catalysis depends on residues Asp-189 and His-192.

The protein belongs to the 'GDSL' lipolytic enzyme family.

This chain is GDSL esterase/lipase At5g45920, found in Arabidopsis thaliana (Mouse-ear cress).